The sequence spans 120 residues: Large ribosomal subunit protein bL17 (120 aa).

Belongs to the bacterial ribosomal protein bL17 family. Part of the 50S ribosomal subunit. Contacts protein L32.

This chain is Large ribosomal subunit protein bL17, found in Bacillus subtilis (strain 168).